A 376-amino-acid chain; its full sequence is Dihydroorotate dehydrogenase (quinone) (376 aa).

Residues 74-78 and T98 contribute to the FMN site; that span reads AGFDK. Residue K78 participates in substrate binding. 123-127 provides a ligand contact to substrate; sequence NRMGF. 2 residues coordinate FMN: N155 and N188. Residue N188 coordinates substrate. The Nucleophile role is filled by S191. N193 contributes to the substrate binding site. The FMN site is built by K226 and T254. Substrate is bound at residue 255 to 256; sequence NT. FMN is bound by residues G284, G313, and 334–335; that span reads YT.

The protein belongs to the dihydroorotate dehydrogenase family. Type 2 subfamily. Monomer. It depends on FMN as a cofactor.

The protein localises to the cell membrane. It carries out the reaction (S)-dihydroorotate + a quinone = orotate + a quinol. It participates in pyrimidine metabolism; UMP biosynthesis via de novo pathway; orotate from (S)-dihydroorotate (quinone route): step 1/1. Its function is as follows. Catalyzes the conversion of dihydroorotate to orotate with quinone as electron acceptor. This Nostoc punctiforme (strain ATCC 29133 / PCC 73102) protein is Dihydroorotate dehydrogenase (quinone).